Consider the following 279-residue polypeptide: Movement protein (279 aa).

Residues 256–266 (PPIAIGSPSAS) show a composition bias toward low complexity. Residues 256 to 279 (PPIAIGSPSASRNNSFRSQVVNGL) form a disordered region. The span at 267–279 (RNNSFRSQVVNGL) shows a compositional bias: polar residues.

This sequence belongs to the cucumovirus movement protein family.

It is found in the host cell junction. The protein resides in the host plasmodesma. Functionally, transports viral genome to neighboring plant cells directly through plasmosdesmata, without any budding. The movement protein allows efficient cell to cell propagation, by bypassing the host cell wall barrier. Acts by forming a tubular structure at the host plasmodesmata, enlarging it enough to allow free passage of virion capsids. In Cucumis sativus (Cucumber), this protein is Movement protein.